A 158-amino-acid chain; its full sequence is S-ribosylhomocysteine lyase (158 aa).

3 residues coordinate Fe cation: H54, H58, and C124.

This sequence belongs to the LuxS family. As to quaternary structure, homodimer. The cofactor is Fe cation.

It carries out the reaction S-(5-deoxy-D-ribos-5-yl)-L-homocysteine = (S)-4,5-dihydroxypentane-2,3-dione + L-homocysteine. In terms of biological role, involved in the synthesis of autoinducer 2 (AI-2) which is secreted by bacteria and is used to communicate both the cell density and the metabolic potential of the environment. The regulation of gene expression in response to changes in cell density is called quorum sensing. Catalyzes the transformation of S-ribosylhomocysteine (RHC) to homocysteine (HC) and 4,5-dihydroxy-2,3-pentadione (DPD). This chain is S-ribosylhomocysteine lyase, found in Limosilactobacillus reuteri (Lactobacillus reuteri).